A 588-amino-acid chain; its full sequence is Adenine deaminase (588 aa).

This sequence belongs to the metallo-dependent hydrolases superfamily. Adenine deaminase family. In terms of assembly, homodimer. Mn(2+) serves as cofactor.

It catalyses the reaction adenine + H2O + H(+) = hypoxanthine + NH4(+). The sequence is that of Adenine deaminase from Escherichia coli (strain 55989 / EAEC).